The chain runs to 347 residues: 4-hydroxyproline 2-epimerase (347 aa).

Gln-85 serves as a coordination point for substrate. The Proton acceptor role is filled by Ser-93. Substrate is bound by residues 94–95 and Asp-251; that span reads GS. Cys-255 (proton donor) is an active-site residue. 256–257 contributes to the substrate binding site; sequence GT.

It belongs to the proline racemase family.

It catalyses the reaction trans-4-hydroxy-L-proline = cis-4-hydroxy-D-proline. Its function is as follows. Catalyzes the epimerization of trans-4-hydroxy-L-proline (t4LHyp) to cis-4-hydroxy-D-proline (c4DHyp). May be involved in a degradation pathway of t4LHyp. Can also catalyze the epimerization of trans-3-hydroxy-L-proline (t3LHyp) to cis-3-hydroxy-D-proline (c3DHyp) in vitro. Displays no proline racemase activity. The polypeptide is 4-hydroxyproline 2-epimerase (Allorhizobium ampelinum (strain ATCC BAA-846 / DSM 112012 / S4) (Agrobacterium vitis (strain S4))).